The chain runs to 26 residues: Probable early E4 17 kDa protein (26 aa).

The chain is Probable early E4 17 kDa protein from Homo sapiens (Human).